The following is a 249-amino-acid chain: Triosephosphate isomerase (249 aa).

Asn11–Lys13 provides a ligand contact to substrate. His91 acts as the Electrophile in catalysis. Glu163 serves as the catalytic Proton acceptor. Substrate is bound by residues Gly169, Ser208, and Gly229–Gly230.

The protein belongs to the triosephosphate isomerase family. As to quaternary structure, homodimer.

It is found in the cytoplasm. It carries out the reaction D-glyceraldehyde 3-phosphate = dihydroxyacetone phosphate. It participates in carbohydrate biosynthesis; gluconeogenesis. The protein operates within carbohydrate degradation; glycolysis; D-glyceraldehyde 3-phosphate from glycerone phosphate: step 1/1. Functionally, involved in the gluconeogenesis. Catalyzes stereospecifically the conversion of dihydroxyacetone phosphate (DHAP) to D-glyceraldehyde-3-phosphate (G3P). This chain is Triosephosphate isomerase, found in Pseudoalteromonas translucida (strain TAC 125).